The chain runs to 120 residues: Ribonuclease P protein component (120 aa).

It belongs to the RnpA family. Consists of a catalytic RNA component (M1 or rnpB) and a protein subunit.

The catalysed reaction is Endonucleolytic cleavage of RNA, removing 5'-extranucleotides from tRNA precursor.. RNaseP catalyzes the removal of the 5'-leader sequence from pre-tRNA to produce the mature 5'-terminus. It can also cleave other RNA substrates such as 4.5S RNA. The protein component plays an auxiliary but essential role in vivo by binding to the 5'-leader sequence and broadening the substrate specificity of the ribozyme. The protein is Ribonuclease P protein component of Mycobacterium leprae (strain Br4923).